A 394-amino-acid polypeptide reads, in one-letter code: MTQLETRTEPMVVNFGPHHPSMHGVLRLVVTLDGEDVVDCEPVIGYLHRGMEKIAENRTNVMFVPYVSRMDYAAGMFYEAIVVNAPEKLANIPVPKRASYIRVLMLELNRIANHLLWLGPFLADVGAQTPFFYIFREREMIYDLWEAATGQRLINNNYFRIGGVAADLPWGWLEKCRDFCDWFGPKIDEYEKLITNNPIFRRRIEGLGRIEKEDAINWSLSGPMLRASGVPWDLRKVDHYECYDDFDWQVAWEKEGDCYARYRVRIEEMRQSLKILRQACDMIPGGPTENLEAKRLNEGKGSDAAGFDFQYVAKKVAPTFKIPNGELYTRLESGKGEIGVFIQGNNDVTPWRFKIRAADSNNLQILPHILKGHKVADIMAILGSIDVIMGSVDR.

This sequence belongs to the complex I 49 kDa subunit family. As to quaternary structure, NDH-1 can be composed of about 15 different subunits; different subcomplexes with different compositions have been identified which probably have different functions.

It is found in the cellular thylakoid membrane. The enzyme catalyses a plastoquinone + NADH + (n+1) H(+)(in) = a plastoquinol + NAD(+) + n H(+)(out). It catalyses the reaction a plastoquinone + NADPH + (n+1) H(+)(in) = a plastoquinol + NADP(+) + n H(+)(out). In terms of biological role, NDH-1 shuttles electrons from an unknown electron donor, via FMN and iron-sulfur (Fe-S) centers, to quinones in the respiratory and/or the photosynthetic chain. The immediate electron acceptor for the enzyme in this species is believed to be plastoquinone. Couples the redox reaction to proton translocation, and thus conserves the redox energy in a proton gradient. Cyanobacterial NDH-1 also plays a role in inorganic carbon-concentration. The polypeptide is NAD(P)H-quinone oxidoreductase subunit H (Synechococcus sp. (strain CC9605)).